The following is a 180-amino-acid chain: MFPMVTGFMNYGQQTVRAARYIGQSFMITLSHANRLPVTIQYPYEKLITSERFRGRIHFEFDKCIACEVCVRVCPIDLPVVDWKLETDIRKKRLLNYSIDFGICIFCGNCVEYCPTNCLSMTEEYELSTYDRHELNYNQIALGRLPMSVIGDYTIRTILNSTPIKKTAGNPLDSKTITNF.

2 4Fe-4S ferredoxin-type domains span residues 55–84 and 95–124; these read GRIH…VDWK and LNYS…MTEE. Cysteine 64, cysteine 67, cysteine 70, cysteine 74, cysteine 104, cysteine 107, cysteine 110, and cysteine 114 together coordinate [4Fe-4S] cluster.

It belongs to the complex I 23 kDa subunit family. NDH is composed of at least 16 different subunits, 5 of which are encoded in the nucleus. It depends on [4Fe-4S] cluster as a cofactor.

The protein localises to the plastid. The protein resides in the chloroplast thylakoid membrane. The enzyme catalyses a plastoquinone + NADH + (n+1) H(+)(in) = a plastoquinol + NAD(+) + n H(+)(out). It carries out the reaction a plastoquinone + NADPH + (n+1) H(+)(in) = a plastoquinol + NADP(+) + n H(+)(out). NDH shuttles electrons from NAD(P)H:plastoquinone, via FMN and iron-sulfur (Fe-S) centers, to quinones in the photosynthetic chain and possibly in a chloroplast respiratory chain. The immediate electron acceptor for the enzyme in this species is believed to be plastoquinone. Couples the redox reaction to proton translocation, and thus conserves the redox energy in a proton gradient. This chain is NAD(P)H-quinone oxidoreductase subunit I, chloroplastic, found in Nandina domestica (Heavenly bamboo).